The sequence spans 308 residues: Sulfoquinovosyl glycerol transport system permease protein SmoG (308 aa).

Helical transmembrane passes span 28 to 48, 92 to 112, 126 to 146, 164 to 184, 223 to 243, and 279 to 299; these read LAVL…VYPV, VLIT…LALL, SLLI…AWFF, GIIW…TIIW, ITLP…TITA, and LGYG…VTAV. The 213-residue stretch at 88–300 folds into the ABC transmembrane type-1 domain; it reads TWNTVLITLI…ALSMCVTAVY (213 aa).

The protein belongs to the binding-protein-dependent transport system permease family. In terms of assembly, the complex is probably composed of two ATP-binding proteins (SmoE), two transmembrane proteins (SmoG and SmoH) and a solute-binding protein (SmoF).

The protein localises to the cell inner membrane. Part of the ABC transporter complex SmoEFGH involved in sulfoquinovosyl glycerol (SQGro) uptake. Responsible for the translocation of the substrate across the membrane. In Agrobacterium fabrum (strain C58 / ATCC 33970) (Agrobacterium tumefaciens (strain C58)), this protein is Sulfoquinovosyl glycerol transport system permease protein SmoG.